Reading from the N-terminus, the 172-residue chain is MDNPRRIIIGIDPGSRITGYGIIWSQGSKQGCIAFGQIKTDNDSLNFRLHQIERELRDLILIHRPHEAAIEQVFTFHNHQSALKLGQARGAALVATAACALSVAEYSARQIKQAVVGYGAATKAQVQHMVHLLLQLEKAPPADAADALAIALCHATSSRLSEKLMQAKGTLT.

Catalysis depends on residues aspartate 12, glutamate 71, and aspartate 143. The Mg(2+) site is built by aspartate 12, glutamate 71, and aspartate 143.

The protein belongs to the RuvC family. Homodimer which binds Holliday junction (HJ) DNA. The HJ becomes 2-fold symmetrical on binding to RuvC with unstacked arms; it has a different conformation from HJ DNA in complex with RuvA. In the full resolvosome a probable DNA-RuvA(4)-RuvB(12)-RuvC(2) complex forms which resolves the HJ. Requires Mg(2+) as cofactor.

It is found in the cytoplasm. It catalyses the reaction Endonucleolytic cleavage at a junction such as a reciprocal single-stranded crossover between two homologous DNA duplexes (Holliday junction).. In terms of biological role, the RuvA-RuvB-RuvC complex processes Holliday junction (HJ) DNA during genetic recombination and DNA repair. Endonuclease that resolves HJ intermediates. Cleaves cruciform DNA by making single-stranded nicks across the HJ at symmetrical positions within the homologous arms, yielding a 5'-phosphate and a 3'-hydroxyl group; requires a central core of homology in the junction. The consensus cleavage sequence is 5'-(A/T)TT(C/G)-3'. Cleavage occurs on the 3'-side of the TT dinucleotide at the point of strand exchange. HJ branch migration catalyzed by RuvA-RuvB allows RuvC to scan DNA until it finds its consensus sequence, where it cleaves and resolves the cruciform DNA. In Coxiella burnetii (strain CbuG_Q212) (Coxiella burnetii (strain Q212)), this protein is Crossover junction endodeoxyribonuclease RuvC.